Reading from the N-terminus, the 398-residue chain is Succinate--CoA ligase [ADP-forming] subunit beta (398 aa).

An ATP-grasp domain is found at 9–254 (KAVLREFGVS…ETEEDAKEIE (246 aa)). ATP-binding positions include Lys-46, 53 to 55 (GRG), Glu-109, Ala-112, and Glu-117. Asn-209 and Asp-223 together coordinate Mg(2+). Substrate is bound by residues Asn-274 and 331-333 (GIM).

Belongs to the succinate/malate CoA ligase beta subunit family. In terms of assembly, heterotetramer of two alpha and two beta subunits. It depends on Mg(2+) as a cofactor.

It catalyses the reaction succinate + ATP + CoA = succinyl-CoA + ADP + phosphate. The enzyme catalyses GTP + succinate + CoA = succinyl-CoA + GDP + phosphate. The protein operates within carbohydrate metabolism; tricarboxylic acid cycle; succinate from succinyl-CoA (ligase route): step 1/1. Its function is as follows. Succinyl-CoA synthetase functions in the citric acid cycle (TCA), coupling the hydrolysis of succinyl-CoA to the synthesis of either ATP or GTP and thus represents the only step of substrate-level phosphorylation in the TCA. The beta subunit provides nucleotide specificity of the enzyme and binds the substrate succinate, while the binding sites for coenzyme A and phosphate are found in the alpha subunit. The protein is Succinate--CoA ligase [ADP-forming] subunit beta of Afipia carboxidovorans (strain ATCC 49405 / DSM 1227 / KCTC 32145 / OM5) (Oligotropha carboxidovorans).